The following is a 345-amino-acid chain: Ribosomal RNA large subunit methyltransferase F (345 aa).

The span at 1–14 (MTSKPMTRRPTANN) shows a compositional bias: polar residues. 2 disordered regions span residues 1–35 (MTSK…RNPH) and 225–258 (EANS…NAAQ). The segment covering 229 to 239 (RKQHNLQRHRG) has biased composition (basic residues). Over residues 246–258 (ISRSSTKSGNAAQ) the composition is skewed to polar residues.

The protein belongs to the methyltransferase superfamily. METTL16/RlmF family.

The protein localises to the cytoplasm. It catalyses the reaction adenosine(1618) in 23S rRNA + S-adenosyl-L-methionine = N(6)-methyladenosine(1618) in 23S rRNA + S-adenosyl-L-homocysteine + H(+). Specifically methylates the adenine in position 1618 of 23S rRNA. The sequence is that of Ribosomal RNA large subunit methyltransferase F from Psychrobacter arcticus (strain DSM 17307 / VKM B-2377 / 273-4).